The sequence spans 177 residues: Large ribosomal subunit protein uL6 (177 aa).

It belongs to the universal ribosomal protein uL6 family. Part of the 50S ribosomal subunit.

Functionally, this protein binds to the 23S rRNA, and is important in its secondary structure. It is located near the subunit interface in the base of the L7/L12 stalk, and near the tRNA binding site of the peptidyltransferase center. In Psychromonas ingrahamii (strain DSM 17664 / CCUG 51855 / 37), this protein is Large ribosomal subunit protein uL6.